The sequence spans 239 residues: 1-(5-phosphoribosyl)-5-[(5-phosphoribosylamino)methylideneamino] imidazole-4-carboxamide isomerase (239 aa).

The active-site Proton acceptor is the aspartate 8. Catalysis depends on aspartate 129, which acts as the Proton donor.

It belongs to the HisA/HisF family.

The protein localises to the cytoplasm. It catalyses the reaction 1-(5-phospho-beta-D-ribosyl)-5-[(5-phospho-beta-D-ribosylamino)methylideneamino]imidazole-4-carboxamide = 5-[(5-phospho-1-deoxy-D-ribulos-1-ylimino)methylamino]-1-(5-phospho-beta-D-ribosyl)imidazole-4-carboxamide. It participates in amino-acid biosynthesis; L-histidine biosynthesis; L-histidine from 5-phospho-alpha-D-ribose 1-diphosphate: step 4/9. The sequence is that of 1-(5-phosphoribosyl)-5-[(5-phosphoribosylamino)methylideneamino] imidazole-4-carboxamide isomerase from Legionella pneumophila (strain Corby).